The primary structure comprises 422 residues: Testin (422 aa).

The region spanning 92–199 (MILTSPVAAK…GDVKLPKEVE (108 aa)) is the PET domain. The segment at 135–165 (QPVAGSEGAQYRKKQLAKQLPAHDQDPSKCH) is disordered. Positions 155 to 165 (PAHDQDPSKCH) are enriched in basic and acidic residues. 3 LIM zinc-binding domains span residues 234–299 (YYCF…SEKP), 300–359 (RCAG…NHAV), and 360–422 (SCQG…KMSS).

The protein belongs to the prickle / espinas / testin family. In terms of tissue distribution, expressed in the animal hemisphere at the 4-cell stage. By stage 18, expressed in cells adjacent to the anterior neural plate. In late neurula, expressed in the cranial neural crest. At tail bud stages, expressed strongly in the head, ventral to the developing eye, branchial arches and lateral line placodes. Also localized in the otic vesicle, dorsal fin and notochord with weaker expression at intersomitic junctions of tail bud embryos.

It is found in the cytoplasm. The protein localises to the cell cortex. The protein resides in the cell junction. Its subcellular location is the focal adhesion. Its function is as follows. Scaffold protein that may play a role in cell adhesion, cell spreading and in the reorganization of the actin cytoskeleton. May inhibit cell growth. Regulates cranial neural crest migration. Acts together with prickle1 to control axial elongation. This chain is Testin, found in Xenopus laevis (African clawed frog).